We begin with the raw amino-acid sequence, 433 residues long: UPF0597 protein DNO_0106 (433 aa).

The protein belongs to the UPF0597 family.

This Dichelobacter nodosus (strain VCS1703A) protein is UPF0597 protein DNO_0106.